The primary structure comprises 100 residues: Urease subunit gamma (100 aa).

It belongs to the urease gamma subunit family. As to quaternary structure, heterotrimer of UreA (gamma), UreB (beta) and UreC (alpha) subunits. Three heterotrimers associate to form the active enzyme.

It localises to the cytoplasm. The catalysed reaction is urea + 2 H2O + H(+) = hydrogencarbonate + 2 NH4(+). It functions in the pathway nitrogen metabolism; urea degradation; CO(2) and NH(3) from urea (urease route): step 1/1. The protein is Urease subunit gamma of Picosynechococcus sp. (strain ATCC 27264 / PCC 7002 / PR-6) (Agmenellum quadruplicatum).